The following is a 322-amino-acid chain: Probable cardiolipin synthase (CMP-forming) (322 aa).

A run of 3 helical transmembrane segments spans residues 143–163 (IGYV…AFAG), 199–219 (LVIS…IVVF), and 289–309 (LQGL…SYVM).

This sequence belongs to the CDP-alcohol phosphatidyltransferase class-I family.

It is found in the mitochondrion inner membrane. The catalysed reaction is a CDP-1,2-diacyl-sn-glycerol + a 1,2-diacyl-sn-glycero-3-phospho-(1'-sn-glycerol) = a cardiolipin + CMP + H(+). In terms of biological role, catalyzes the synthesis of cardiolipin (CL) (diphosphatidylglycerol) by specifically transferring a phosphatidyl group from CDP-diacylglycerol to phosphatidylglycerol (PG). CL is a key phospholipid in mitochondrial membranes and plays important roles in maintaining the functional integrity and dynamics of mitochondria under both optimal and stress conditions. This is Probable cardiolipin synthase (CMP-forming) (CLS) from Drosophila melanogaster (Fruit fly).